The following is an 817-amino-acid chain: Coiled-coil domain-containing protein 175 (817 aa).

Coiled-coil stretches lie at residues 130-166 and 217-594; these read ILEI…ALGI and LQDA…KQEE. A disordered region spans residues 761-817; it reads EEESPSSLSKEDLQKAGMKQKEEKTLRFSPSLHTRRDTLSRNCKMIKKRSRSPKNKP. Residues 769-786 are compositionally biased toward basic and acidic residues; that stretch reads SKEDLQKAGMKQKEEKTL. The span at 804-817 shows a compositional bias: basic residues; that stretch reads KMIKKRSRSPKNKP.

In Rattus norvegicus (Rat), this protein is Coiled-coil domain-containing protein 175 (Ccdc175).